The following is a 214-amino-acid chain: Membrane-spanning 4-domains subfamily A member 3 (214 aa).

The tract at residues 1-31 is disordered; sequence MASHEVDNAELGSASAHGTPGSEAGPEELNT. Residues 1–49 lie on the Cytoplasmic side of the membrane; it reads MASHEVDNAELGSASAHGTPGSEAGPEELNTSVYQPIDGSPDYQKAKLQ. A helical transmembrane segment spans residues 50–70; that stretch reads VLGAIQILNAAMILALGVFLG. The Extracellular portion of the chain corresponds to 71–81; that stretch reads SLQYPYHFQKH. The helical transmembrane segment at 82-102 threads the bilayer; it reads FFFFTFYTGYPIWGAVFFCSS. At 103-124 the chain is on the cytoplasmic side; it reads GTLSVVAGIKPTRTWIQNSFGM. A helical membrane pass occupies residues 125-145; it reads NIASATIALVGTAFLSLNIAV. Residues 146–175 are Extracellular-facing; that stretch reads NIQSLRSCHSSSESPDLCNYMGSISNGMVS. Residues 176–196 traverse the membrane as a helical segment; it reads LLLILTLLELCVTISTIAMWC. The Cytoplasmic segment spans residues 197 to 214; sequence NANCCNSREEISSPPNSV.

This sequence belongs to the MS4A family. In terms of assembly, interacts with CDKN3. Interacts with CDKN3-CDK2 complexes through its binding to CDKN3; this interaction facilitates dissociation of cyclin A from CDKN3-CDK2 complexes. In terms of tissue distribution, expressed specifically in hematopoietic cells and tissues.

It localises to the endomembrane system. The protein resides in the cytoplasm. It is found in the perinuclear region. Its function is as follows. Hematopoietic modulator for the G1-S cell cycle transition. Modulates the level of phosphorylation of cyclin-dependent kinase 2 (CDK2) through its direct binding to cyclin-dependent kinase inhibitor 3 (CDKN3/KAP). This is Membrane-spanning 4-domains subfamily A member 3 (MS4A3) from Homo sapiens (Human).